The sequence spans 377 residues: Prostaglandin reductase-3 (377 aa).

N6-acetyllysine is present on Lys35. 7 residues coordinate NADP(+): Thr185, Ser205, Lys209, Tyr224, Ser247, Ile269, and Tyr275. Ser299 carries the phosphoserine modification. NADP(+) is bound by residues 303-305 and Asn361; that span reads FFL.

It belongs to the zinc-containing alcohol dehydrogenase family. Quinone oxidoreductase subfamily.

It is found in the peroxisome. The catalysed reaction is 13,14-dihydro-15-oxo-prostaglandin E2 + NADP(+) = 15-oxoprostaglandin E2 + NADPH + H(+). It catalyses the reaction 13,14-dihydro-15-oxo-prostaglandin E1 + NADP(+) = 15-oxoprostaglandin E1 + NADPH + H(+). The enzyme catalyses 13,14-dihydro-15-oxo-PGF2alpha + NADP(+) = 15-oxoprostaglandin F2alpha + NADPH + H(+). It carries out the reaction 13,14-dihydro-15-oxo-prostaglandin F1alpha + NADP(+) = 15-oxoprostaglandin F1alpha + NADPH + H(+). Functions as 15-oxo-prostaglandin 13-reductase and acts on 15-keto-PGE1, 15-keto-PGE2, 15-keto-PGE1-alpha and 15-keto-PGE2-alpha with highest efficiency towards 15-keto-PGE2-alpha. Overexpression represses transcriptional activity of PPARG and inhibits adipocyte differentiation. In Bos taurus (Bovine), this protein is Prostaglandin reductase-3 (PTGR3).